A 205-amino-acid chain; its full sequence is High frequency lysogenization protein HflD homolog (205 aa).

Belongs to the HflD family.

It is found in the cytoplasm. The protein resides in the cell inner membrane. In Vibrio parahaemolyticus serotype O3:K6 (strain RIMD 2210633), this protein is High frequency lysogenization protein HflD homolog.